Here is a 332-residue protein sequence, read N- to C-terminus: MKKIAVDAMGGDNAPQAIVEGVNQALADFSDIEIQLYGDEAKIKTYLKANDRVSIIHTDEKINSDDEPVKAIRKKKQASMVLGAQAVKDGKADAVLSAGNTGALLAAGLLVVGRIKNIDRPGLMSSLPTIDGKGFNMLDLGANAENTAHHLHQYAILGSFYAKNVRGVAHPRIGLLNNGTETTKGDPLRKETFALLAADETLNFIGNVEARDLMNSVADVVVTDGFTGNAVLKSIEGTALGIMEQLKTSIKQAGLRAKLGALLLKNSLYDLKDSLDYSGAGGAVLFGLKAPVVKCHGSSDAKSVYYTIKQIRIMLETDVVGQLVEEFSNRGD.

It belongs to the PlsX family. As to quaternary structure, homodimer. Probably interacts with PlsY.

The protein localises to the cytoplasm. The enzyme catalyses a fatty acyl-[ACP] + phosphate = an acyl phosphate + holo-[ACP]. The protein operates within lipid metabolism; phospholipid metabolism. In terms of biological role, catalyzes the reversible formation of acyl-phosphate (acyl-PO(4)) from acyl-[acyl-carrier-protein] (acyl-ACP). This enzyme utilizes acyl-ACP as fatty acyl donor, but not acyl-CoA. In Streptococcus mutans serotype c (strain ATCC 700610 / UA159), this protein is Phosphate acyltransferase.